The chain runs to 458 residues: Probable ECA polymerase (458 aa).

11 consecutive transmembrane segments (helical) span residues 3–23, 37–57, 65–85, 112–132, 154–174, 180–200, 201–221, 222–242, 340–360, 377–397, and 409–429; these read LAQF…VLTL, VFFS…TCLL, VVPV…YAIY, THLT…IFFL, GVAL…VYFL, AWFF…VIVG, GTRA…IVRG, WISL…MFWL, LVVM…GMII, YKAA…IVLA, and VFFC…YWLF.

This sequence belongs to the WzyE family. Probably part of a complex composed of WzxE, WzyE and WzzE.

It is found in the cell inner membrane. It participates in bacterial outer membrane biogenesis; enterobacterial common antigen biosynthesis. Its function is as follows. Probably involved in the polymerization of enterobacterial common antigen (ECA) trisaccharide repeat units. The chain is Probable ECA polymerase from Serratia proteamaculans (strain 568).